We begin with the raw amino-acid sequence, 466 residues long: UDP-N-acetylmuramate--L-alanine ligase (466 aa).

ATP is bound at residue 114-120 (GTHGKTT).

This sequence belongs to the MurCDEF family.

It localises to the cytoplasm. It carries out the reaction UDP-N-acetyl-alpha-D-muramate + L-alanine + ATP = UDP-N-acetyl-alpha-D-muramoyl-L-alanine + ADP + phosphate + H(+). Its pathway is cell wall biogenesis; peptidoglycan biosynthesis. Functionally, cell wall formation. The polypeptide is UDP-N-acetylmuramate--L-alanine ligase (Chlorobium phaeobacteroides (strain DSM 266 / SMG 266 / 2430)).